A 481-amino-acid polypeptide reads, in one-letter code: MADLTSTSVNQTVLATQPLTTRELQQIRSMVQTSSNLMQFGNHTALPDSYLETFLFNNGVVYEDGDVFYAWSETVHHPTFLDAQDQRYSLELHPIEHDQTVSPNVSHSVWWQCADFNKFRTLSVFGRRVVPRVRYHVDEFTITFSVSVPLRCRSFQDYYDIHVQMKMRTPSPSVHDPTHISLASEIESISNDNDVSVPAVVSQPNEITINVGALTPYVGHSSKLAGAALSMIMNIPRKPVPASPAPRVHPAVLLTHSFFDFVREQISRMDATIMPIHLVEQTFPEAFLAIPVPRDIETGLVTALRSVAMVPTSQYNLHVMAERVQSQSMDWTGGNFSRIPMHDDDIIMTHDTITALSTGVSTYHHHLAITEDDMAVIKSRVPGVIKYRGSIDDLKALSNLLESPRTHQVLLHSIATIHIYDIGDESEIDDQEMYSKKISFLFLLAYLMECVTLPTTLSQGFEPRLPLLPSSRVPFYLAFGV.

This is an uncharacterized protein from Cryphonectria parasitica (Chestnut blight fungus).